Reading from the N-terminus, the 180-residue chain is UPF0398 protein EF_1150 (180 aa).

The protein belongs to the UPF0398 family.

This chain is UPF0398 protein EF_1150, found in Enterococcus faecalis (strain ATCC 700802 / V583).